The chain runs to 251 residues: Phosphoribosylaminoimidazole-succinocarboxamide synthase (251 aa).

This sequence belongs to the SAICAR synthetase family.

It catalyses the reaction 5-amino-1-(5-phospho-D-ribosyl)imidazole-4-carboxylate + L-aspartate + ATP = (2S)-2-[5-amino-1-(5-phospho-beta-D-ribosyl)imidazole-4-carboxamido]succinate + ADP + phosphate + 2 H(+). The protein operates within purine metabolism; IMP biosynthesis via de novo pathway; 5-amino-1-(5-phospho-D-ribosyl)imidazole-4-carboxamide from 5-amino-1-(5-phospho-D-ribosyl)imidazole-4-carboxylate: step 1/2. The chain is Phosphoribosylaminoimidazole-succinocarboxamide synthase from Ruegeria pomeroyi (strain ATCC 700808 / DSM 15171 / DSS-3) (Silicibacter pomeroyi).